The chain runs to 354 residues: Ferredoxin--NADP reductase (354 aa).

FAD contacts are provided by Asp-39, Gln-47, Tyr-52, Val-92, Phe-127, Asp-296, and Thr-337.

The protein belongs to the ferredoxin--NADP reductase type 2 family. As to quaternary structure, homodimer. It depends on FAD as a cofactor.

The catalysed reaction is 2 reduced [2Fe-2S]-[ferredoxin] + NADP(+) + H(+) = 2 oxidized [2Fe-2S]-[ferredoxin] + NADPH. This is Ferredoxin--NADP reductase from Albidiferax ferrireducens (strain ATCC BAA-621 / DSM 15236 / T118) (Rhodoferax ferrireducens).